Consider the following 487-residue polypeptide: Lysophospholipid acyltransferase 5 (487 aa).

At A2 the chain carries N-acetylalanine. The next 6 helical transmembrane spans lie at 44-64, 84-104, 111-131, 180-200, 227-247, and 285-305; these read LIISIFLGYPFALFYRHYLFY, FNFGNQLYHSLLCIVLQFLIL, ITAVLTTFCFQMAYLLAGYYY, GVPSLLEVAGFSYFYGAFLVG, IIPALKRLSLGLFYLVGYTLL, and VTCWLVTEGVCILTGLGFNGF. Active-site residues include N338 and H374. Helical transmembrane passes span 364–384, 422–442, and 453–473; these read GLSLLFLALWHGLHSGYLVCF, LVQQTIHWLFMGYSMTAFCLF, and SIYFLGHIFFLSLLFILPYIH. A Di-lysine motif motif is present at residues 484 to 487; that stretch reads KKME.

It belongs to the membrane-bound acyltransferase family. As to expression, highly expressed in liver, pancreas and adipose tissue. Very low expression in skeletal muscle and heart. Detected in neutrophils.

Its subcellular location is the endoplasmic reticulum membrane. The enzyme catalyses a 1-acyl-sn-glycero-3-phosphocholine + an acyl-CoA = a 1,2-diacyl-sn-glycero-3-phosphocholine + CoA. It catalyses the reaction a 1-acyl-sn-glycero-3-phosphoethanolamine + an acyl-CoA = a 1,2-diacyl-sn-glycero-3-phosphoethanolamine + CoA. It carries out the reaction a 1-acyl-sn-glycero-3-phospho-L-serine + an acyl-CoA = a 1,2-diacyl-sn-glycero-3-phospho-L-serine + CoA. The catalysed reaction is (9Z,12Z)-octadecadienoyl-CoA + a 1-acyl-sn-glycero-3-phosphocholine = 1-acyl-2-(9Z,12Z)-octadecadienoyl-sn-glycero-3-phosphocholine + CoA. The enzyme catalyses (5Z,8Z,11Z,14Z)-eicosatetraenoyl-CoA + a 1-acyl-sn-glycero-3-phosphocholine = 1-acyl-2-(5Z,8Z,11Z,14Z-eicosatetraenoyl)-sn-glycero-3-phosphocholine + CoA. It catalyses the reaction dodecanoyl-CoA + 1-hexadecanoyl-sn-glycero-3-phosphocholine = 1-hexadecanoyl-2-dodecanoyl-sn-glycero-3-phosphocholine + CoA. It carries out the reaction octadecanoyl-CoA + 1-hexadecanoyl-sn-glycero-3-phosphocholine = 1-hexadecanoyl-2-octadecanoyl-sn-glycero-3-phosphocholine + CoA. The catalysed reaction is 1-dodecanoyl-sn-glycero-3-phosphocholine + hexadecanoyl-CoA = 1-dodecanoyl-2-hexadecanoyl-sn-glycero-3-phosphocholine + CoA. The enzyme catalyses 1-tetradecanoyl-sn-glycero-3-phosphocholine + hexadecanoyl-CoA = 1-tetradecanoyl-2-hexadecanoyl-sn-glycero-3-phosphocholine + CoA. It catalyses the reaction 1-hexadecanoyl-sn-glycero-3-phosphocholine + hexadecanoyl-CoA = 1,2-dihexadecanoyl-sn-glycero-3-phosphocholine + CoA. It carries out the reaction 1-octadecanoyl-sn-glycero-3-phosphocholine + hexadecanoyl-CoA = 1-octadecanoyl-2-hexadecanoyl-sn-glycero-3-phosphocholine + CoA. The catalysed reaction is 1-(9Z-octadecenoyl)-sn-glycero-3-phosphocholine + hexadecanoyl-CoA = 1-(9Z-octadecenoyl)-2-hexadecanoyl-sn-glycero-3-phosphocholine + CoA. The enzyme catalyses (9Z)-hexadecenoyl-CoA + 1-hexadecanoyl-sn-glycero-3-phosphocholine = 1-hexadecanoyl-2-(9Z-hexadecenoyl)-sn-glycero-3-phosphocholine + CoA. It catalyses the reaction 1-hexadecanoyl-sn-glycero-3-phosphocholine + (9Z)-octadecenoyl-CoA = 1-hexadecanoyl-2-(9Z-octadecenoyl)-sn-glycero-3-phosphocholine + CoA. It carries out the reaction (9Z,12Z)-octadecadienoyl-CoA + 1-hexadecanoyl-sn-glycero-3-phosphocholine = 1-hexadecanoyl-2-(9Z,12Z-octadecadienoyl)-sn-glycero-3-phosphocholine + CoA. The catalysed reaction is 1-dodecanoyl-sn-glycero-3-phosphocholine + (5Z,8Z,11Z,14Z)-eicosatetraenoyl-CoA = 1-dodecanoyl-2-(5Z,8Z,11Z,14Z)-eicosatetraenoyl-sn-glycero-3-phosphocholine + CoA. The enzyme catalyses (5Z,8Z,11Z,14Z)-eicosatetraenoyl-CoA + 1-hexadecanoyl-sn-glycero-3-phosphocholine = 1-hexadecanoyl-2-(5Z,8Z,11Z,14Z-eicosatetraenoyl)-sn-glycero-3-phosphocholine + CoA. It catalyses the reaction 1-octadecanoyl-sn-glycero-3-phosphocholine + (5Z,8Z,11Z,14Z)-eicosatetraenoyl-CoA = 1-octadecanoyl-2-(5Z,8Z,11Z,14Z-eicosatetraenoyl)-sn-glycero-3-phosphocholine + CoA. It carries out the reaction 1-eicosanoyl-sn-glycero-3-phosphocholine + (5Z,8Z,11Z,14Z)-eicosatetraenoyl-CoA = 1-eicosanoyl-2-(5Z,8Z,11Z,14Z)-eicosatetraenoyl-sn-glycero-3-phosphocholine + CoA. The catalysed reaction is 1-(9Z-octadecenoyl)-sn-glycero-3-phosphocholine + (9Z)-octadecenoyl-CoA = 1,2-di-(9Z-octadecenoyl)-sn-glycero-3-phosphocholine + CoA. The enzyme catalyses 1-(9Z-octadecenoyl)-sn-glycero-3-phosphocholine + (9Z,12Z)-octadecadienoyl-CoA = 1-(9Z)-octadecenoyl-2-(9Z,12Z)-octadecadienoyl-sn-glycero-3-phosphocholine + CoA. It catalyses the reaction 1-(9Z-octadecenoyl)-sn-glycero-3-phosphocholine + (5Z,8Z,11Z,14Z)-eicosatetraenoyl-CoA = 1-(9Z)-octadecenoyl-2-(5Z,8Z,11Z,14Z)-icosatetraenoyl-sn-glycero-3-phosphocholine + CoA. It carries out the reaction a 1-acyl-sn-glycero-3-phosphoethanolamine + (9Z,12Z)-octadecadienoyl-CoA = 1-acyl-2-(9Z,12Z)-octadecadienoyl-sn-glycero-3-phosphoethanolamine + CoA. The catalysed reaction is 1-(9Z-octadecenoyl)-sn-glycero-3-phosphoethanolamine + (9Z,12Z)-octadecadienoyl-CoA = 1-(9Z)-octadecenoyl-2-(9Z,12Z)-octadecadienoyl-sn-glycero-3-phosphoethanolamine + CoA. The enzyme catalyses 1-(10Z-heptadecenoyl)-sn-glycero-3-phosphoethanolamine + (9Z,12Z)-octadecadienoyl-CoA = 1-(10Z-heptadecenoyl)-2-(9Z,12Z-octadecadienoyl)-sn-glycero-3-phosphoethanolamine + CoA. It catalyses the reaction a 1-acyl-sn-glycero-3-phosphoethanolamine + (5Z,8Z,11Z,14Z)-eicosatetraenoyl-CoA = 1-acyl-2-(5Z,8Z,11Z,14Z)-eicosatetraenoyl-sn-glycero-3-phosphoethanolamine + CoA. It carries out the reaction 1-hexadecanoyl-sn-glycero-3-phosphoethanolamine + (5Z,8Z,11Z,14Z)-eicosatetraenoyl-CoA = 1-hexadecanoyl-2-(5Z,8Z,11Z,14Z-eicosatetraenoyl)-sn-glycero-3-phosphoethanolamine + CoA. The catalysed reaction is 1-(9Z-octadecenoyl)-sn-glycero-3-phosphoethanolamine + (5Z,8Z,11Z,14Z)-eicosatetraenoyl-CoA = 1-(9Z)-octadecenoyl-2-(5Z,8Z,11Z,14Z)-eicosatetraenoyl-sn-glycero-3-phosphoethanolamine + CoA. The enzyme catalyses 1-(10Z-heptadecenoyl)-sn-glycero-3-phosphoethanolamine + (5Z,8Z,11Z,14Z)-eicosatetraenoyl-CoA = 1-(10Z-heptadecenoyl)-2-(5Z,8Z,11Z,14Z-eicosatetraenoyl)-sn-glycero-3-phosphoethanolamine + CoA. It catalyses the reaction a 1-O-(1Z-alkenyl)-sn-glycero-3-phosphoethanolamine + (5Z,8Z,11Z,14Z)-eicosatetraenoyl-CoA = 1-O-(1Z)-alkenyl-2-(5Z,8Z,11Z,14Z)-eicosatetraenoyl-sn-glycero-3-phosphoethanolamine + CoA. It carries out the reaction a 1-acyl-sn-glycero-3-phospho-L-serine + (9Z,12Z)-octadecadienoyl-CoA = 1-acyl-2-(9Z,12Z-octadecadienoyl)-sn-glycero-3-phospho-L-serine + CoA. The catalysed reaction is a 1-acyl-sn-glycero-3-phospho-L-serine + (5Z,8Z,11Z,14Z)-eicosatetraenoyl-CoA = 1-acyl-2-(5Z,8Z,11Z,14Z-eicosatetraenoyl)-sn-glycero-3-phospho-L-serine + CoA. The enzyme catalyses 1-hexadecanoyl-sn-glycero-3-phospho-L-serine + (9Z)-octadecenoyl-CoA = 1-hexadecanoyl-2-(9Z-octadecenoyl)-sn-glycero-3-phospho-L-serine + CoA. It catalyses the reaction 1-(9Z-octadecenoyl)-sn-glycero-3-phospho-L-serine + (9Z)-octadecenoyl-CoA = 1,2-di-(9Z)-octadecenoyl-sn-glycero-3-phospho-L-serine + CoA. It carries out the reaction 1-hexadecanoyl-sn-glycero-3-phospho-L-serine + (9Z,12Z)-octadecadienoyl-CoA = 1-hexadecanoyl-2-(9Z,12Z-octadecadienoyl)-sn-glycero-3-phospho-L-serine + CoA. The catalysed reaction is 1-(9Z-octadecenoyl)-sn-glycero-3-phospho-L-serine + (9Z,12Z)-octadecadienoyl-CoA = 1-(9Z-octadecenoyl)-2-(9Z,12Z-octadienoyl)-sn-glycero-3-phospho-L-serine + CoA. The enzyme catalyses 1-hexadecanoyl-sn-glycero-3-phospho-L-serine + (5Z,8Z,11Z,14Z)-eicosatetraenoyl-CoA = 1-hexadecanoyl-2-(5Z,8Z,11Z,14Z-eicosatetraenoyl)-sn-glycero-3-phospho-L-serine + CoA. It catalyses the reaction 1-(9Z-octadecenoyl)-sn-glycero-3-phospho-L-serine + (5Z,8Z,11Z,14Z)-eicosatetraenoyl-CoA = 1-(9Z-octadecenoyl)-2-(5Z,8Z,11Z,14Z-eicosatetraenoyl)-sn-glycero-3-phospho-L-serine + CoA. It functions in the pathway lipid metabolism; phospholipid metabolism. Activity is inhibited by thimerosal. Its function is as follows. Lysophospholipid O-acyltransferase (LPLAT) that catalyzes the reacylation step of the phospholipid remodeling process also known as the Lands cycle. Catalyzes transfer of the fatty acyl chain from fatty acyl-CoA to 1-acyl lysophospholipid to form various classes of phospholipids. Converts 1-acyl lysophosphatidylcholine (LPC) into phosphatidylcholine (PC) (LPCAT activity), 1-acyl lysophosphatidylserine (LPS) into phosphatidylserine (PS) (LPSAT activity) and 1-acyl lysophosphatidylethanolamine (LPE) into phosphatidylethanolamine (PE) (LPEAT activity). Favors polyunsaturated fatty acyl-CoAs as acyl donors compared to saturated fatty acyl-CoAs. Has higher activity for LPC acyl acceptors compared to LPEs and LPSs. Can also transfer the fatty acyl chain from fatty acyl-CoA to 1-O-alkyl lysophospholipid or 1-O-alkenyl lysophospholipid with lower efficiency. Acts as a major LPC O-acyltransferase in liver and intestine. As a component of the liver X receptor/NR1H3 or NR1H2 signaling pathway, mainly catalyzes the incorporation of arachidonate into PCs of endoplasmic reticulum (ER) membranes, increasing membrane dynamics and enabling triacylglycerols transfer to nascent very low-density lipoprotein (VLDL) particles. Promotes processing of sterol regulatory protein SREBF1 in hepatocytes, likely by facilitating the translocation of SREBF1-SCAP complex from ER to the Golgi apparatus. Participates in mechanisms by which the liver X receptor/NR1H3 or NR1H2 signaling pathway counteracts lipid-induced ER stress response and inflammation. Down-regulates hepatic inflammation by limiting arachidonic acid availability for synthesis of inflammatory eicosanoids, such as prostaglandins. In enterocytes, acts as a component of a gut-brain feedback loop that coordinates dietary lipid absorption and food intake. Regulates the abundance of PCs containing linoleate and arachidonate in enterocyte membranes, enabling passive diffusion of fatty acids and cholesterol across the membrane for efficient chylomicron assembly. In the intestinal crypt, acts as a component of dietary-responsive phospholipid-cholesterol axis, regulating the biosynthesis of cholesterol and its mitogenic effects on intestinal stem cells. This is Lysophospholipid acyltransferase 5 (LPCAT3) from Homo sapiens (Human).